The chain runs to 513 residues: Nitrogenase molybdenum-iron protein beta chain (513 aa).

Positions 70, 95, and 153 each coordinate [8Fe-7S] cluster.

Belongs to the NifD/NifK/NifE/NifN family. In terms of assembly, tetramer of two alpha and two beta chains. Forms complex with the iron protein (nitrogenase component 2). It depends on [8Fe-7S] cluster as a cofactor.

The catalysed reaction is N2 + 8 reduced [2Fe-2S]-[ferredoxin] + 16 ATP + 16 H2O = H2 + 8 oxidized [2Fe-2S]-[ferredoxin] + 2 NH4(+) + 16 ADP + 16 phosphate + 6 H(+). In terms of biological role, this molybdenum-iron protein is part of the nitrogenase complex that catalyzes the key enzymatic reactions in nitrogen fixation. The sequence is that of Nitrogenase molybdenum-iron protein beta chain (nifK1) from Sinorhizobium fredii (strain NBRC 101917 / NGR234).